The primary structure comprises 856 residues: Histone-lysine N-methyltransferase EZA1 (856 aa).

Polar residues predominate over residues 1–11; the sequence is MVTDDSNSSGR. 3 disordered regions span residues 1–34, 66–87, and 366–473; these read MVTD…GLEN, VSPF…NSNM, and NVDS…HHGS. Over residues 17 to 28 the composition is skewed to acidic residues; it reads DDDDDGEEEEDR. The stretch at 22-49 forms a coiled coil; the sequence is GEEEEDRLEGLENRLSELKRKIQGERVR. Over residues 68–87 the composition is skewed to polar residues; it reads PFSSAASSRATAEDNGNSNM. The span at 374-392 shows a compositional bias: basic and acidic residues; that stretch reads EQEHGIRGKREVPILKDSN. Polar residues predominate over residues 393–419; sequence DLPNLSNKKQKTAASDTKMSFVNSVPS. A compositionally biased stretch (basic and acidic residues) spans 438–451; that stretch reads KVNRDSEADAKEVG. The SANT domain maps to 489-539; sequence PSTEWNPIEKDLYLKGVEIFGRNSCLIARNLLSGLKTCLDVSNYMRENEVS. One can recognise a CXC domain in the interval 594–693; the sequence is WKRIAGGKNQ…SLGEAPRRGE (100 aa). The SET domain occupies 707 to 822; the sequence is QRILLGKSDV…ASEELFYDYR (116 aa). Position 821 (Tyr821) interacts with S-adenosyl-L-methionine. Positions 827-856 are disordered; sequence QAPVWARKPEGSKKDDSAITHRRARKHQSH. Over residues 833–845 the composition is skewed to basic and acidic residues; it reads RKPEGSKKDDSAI. Positions 838–845 match the Nuclear localization signal motif; it reads SKKDDSAI. Positions 846 to 856 are enriched in basic residues; that stretch reads THRRARKHQSH.

This sequence belongs to the class V-like SAM-binding methyltransferase superfamily. Histone-lysine methyltransferase family. EZ subfamily. Component of the plant homeodomain / polycomb repressive complex 2 (PHD-PRC2) large complex during prolonged cold, composed of core PRC2 components (VRN2, EZA1, FIE and MSI1), and three related PHD finger proteins (VIL1, VIL2 and VIN3) that mediates histone H3 trimethylation on 'Lys-27' H3K27me3. Interacts with TAF13. Interacts with EOL1. Interacts (via SANT domain) with HXK1 in the nucleus.

The protein localises to the nucleus. The catalysed reaction is L-lysyl(27)-[histone H3] + 3 S-adenosyl-L-methionine = N(6),N(6),N(6)-trimethyl-L-lysyl(27)-[histone H3] + 3 S-adenosyl-L-homocysteine + 3 H(+). Its function is as follows. Polycomb group (PcG) protein. Catalytic subunit of some PcG multiprotein complex, which methylates 'Lys-27' of histone H3, leading to transcriptional repression of the affected target genes, mainly abscisic acid (ABA) responsive elements. PcG proteins act by forming multiprotein complexes, which are required to maintain the transcriptionally repressive state of homeotic genes throughout development. PcG proteins are not required to initiate repression, but to maintain it during later stages of development. Forms a nuclear complex with CLF and HXK1 to target common glucose-responsive genes and regulate glucose signaling by glucose-mediated gene repression. Affects the recruitment of HXK1 to the target chromatin. This Arabidopsis thaliana (Mouse-ear cress) protein is Histone-lysine N-methyltransferase EZA1.